Here is a 245-residue protein sequence, read N- to C-terminus: Complement C1q subcomponent subunit A (245 aa).

A signal peptide spans 1–22 (MEGPRGWLVLCVLAISLASMVT). Positions 27-38 (RAPDGKKGEAGR) are enriched in basic and acidic residues. The segment at 27-114 (RAPDGKKGEA…SPGNIKDQPR (88 aa)) is disordered. The 79-residue stretch at 31–109 (GKKGEAGRPG…KGTKGSPGNI (79 aa)) folds into the Collagen-like domain. Lys33 carries the post-translational modification 5-hydroxylysine. The O-linked (Gal...) hydroxylysine glycan is linked to Lys33. 2 positions are modified to 4-hydroxyproline: Pro39 and Pro45. Lys48 bears the 5-hydroxylysine mark. Residue Lys48 is glycosylated (O-linked (Gal...) hydroxylysine). A 4-hydroxyproline mark is found at Pro54 and Pro57. Lys67 is subject to 5-hydroxylysine. O-linked (Gal...) hydroxylysine glycosylation is present at Lys67. A 4-hydroxyproline mark is found at Pro73, Pro79, and Pro85. 5-hydroxylysine is present on Lys100. Lys100 carries an O-linked (Gal...) hydroxylysine glycan. The 136-residue stretch at 110–245 (KDQPRPAFSA…FSGFLIFPSA (136 aa)) folds into the C1q domain. N-linked (GlcNAc...) asparagine glycosylation occurs at Asn146. The cysteines at positions 172 and 190 are disulfide-linked. Position 199 (Gln199) interacts with Ca(2+).

As to quaternary structure, core component of the complement C1 complex, a calcium-dependent complex composed of 1 molecule of the C1Q subcomplex, 2 molecules of C1R and 2 molecules of C1S. The C1Q subcomplex is composed 18 subunits: 3 chains of C1QA, C1QB, and C1QC trimerize to form 6 collagen-like triple helices connected to six globular ligand-recognition modules (C1q domain). Interacts with CR1 (via Sushi 24 and Sushi 25 domains). Interacts (via C-terminus) with CD33; this interaction activates CD33 inhibitory motifs. In terms of assembly, (Microbial infection) Interacts with Staphylococcus aureus protein Cna; this interaction results in the inhibition of the classical complement pathway. In terms of processing, O-linked glycans are assumed to be the Glc-Gal disaccharides typically found as secondary modifications of hydroxylated lysines in collagen-like domains.

Its subcellular location is the secreted. The protein localises to the cell surface. With respect to regulation, the C1Q subcomplex is inhibited by sulfated molecules, such as triterpenoid sulfates, heparan sulfate, or chondroitin sulfates. Its function is as follows. Core component of the complement C1 complex, a multiprotein complex that initiates the classical pathway of the complement system, a cascade of proteins that leads to phagocytosis and breakdown of pathogens and signaling that strengthens the adaptive immune system. The classical complement pathway is initiated by the C1Q subcomplex of the C1 complex, which specifically binds IgG or IgM immunoglobulins complexed with antigens, forming antigen-antibody complexes on the surface of pathogens: C1QA, together with C1QB and C1QC, specifically recognizes and binds the Fc regions of IgG or IgM via its C1q domain. Immunoglobulin-binding activates the proenzyme C1R, which cleaves C1S, initiating the proteolytic cascade of the complement system. The C1Q subcomplex is activated by a hexamer of IgG complexed with antigens, while it is activated by a pentameric IgM. The C1Q subcomplex also recognizes and binds phosphatidylserine exposed on the surface of cells undergoing programmed cell death, possibly promoting activation of the complement system. The protein is Complement C1q subcomponent subunit A of Homo sapiens (Human).